The primary structure comprises 366 residues: Dual-specificity RNA methyltransferase RlmN (366 aa).

Glu91 acts as the Proton acceptor in catalysis. Residues 97-333 (EDDRGTLCVS…TTVRKTRGED (237 aa)) enclose the Radical SAM core domain. Residues Cys104 and Cys338 are joined by a disulfide bond. The [4Fe-4S] cluster site is built by Cys111, Cys115, and Cys118. S-adenosyl-L-methionine-binding positions include 164 to 165 (GE), Ser196, 218 to 220 (SLH), and Asn295. Cys338 functions as the S-methylcysteine intermediate in the catalytic mechanism.

It belongs to the radical SAM superfamily. RlmN family. It depends on [4Fe-4S] cluster as a cofactor.

Its subcellular location is the cytoplasm. The catalysed reaction is adenosine(2503) in 23S rRNA + 2 reduced [2Fe-2S]-[ferredoxin] + 2 S-adenosyl-L-methionine = 2-methyladenosine(2503) in 23S rRNA + 5'-deoxyadenosine + L-methionine + 2 oxidized [2Fe-2S]-[ferredoxin] + S-adenosyl-L-homocysteine. The enzyme catalyses adenosine(37) in tRNA + 2 reduced [2Fe-2S]-[ferredoxin] + 2 S-adenosyl-L-methionine = 2-methyladenosine(37) in tRNA + 5'-deoxyadenosine + L-methionine + 2 oxidized [2Fe-2S]-[ferredoxin] + S-adenosyl-L-homocysteine. Its function is as follows. Specifically methylates position 2 of adenine 2503 in 23S rRNA and position 2 of adenine 37 in tRNAs. m2A2503 modification seems to play a crucial role in the proofreading step occurring at the peptidyl transferase center and thus would serve to optimize ribosomal fidelity. The sequence is that of Dual-specificity RNA methyltransferase RlmN from Laribacter hongkongensis (strain HLHK9).